We begin with the raw amino-acid sequence, 270 residues long: tRNA pseudouridine synthase A (270 aa).

The active-site Nucleophile is D60. Residues 107–111 (FHARF) form an RNA binding region. Y118 serves as a coordination point for substrate. Residues 168–172 (QCQSR) are interaction with tRNA.

This sequence belongs to the tRNA pseudouridine synthase TruA family. In terms of assembly, homodimer.

It catalyses the reaction uridine(38/39/40) in tRNA = pseudouridine(38/39/40) in tRNA. In terms of biological role, formation of pseudouridine at positions 38, 39 and 40 in the anticodon stem and loop of transfer RNAs. This Escherichia coli (strain K12 / DH10B) protein is tRNA pseudouridine synthase A.